Reading from the N-terminus, the 308-residue chain is Elongation factor Ts (308 aa).

Residues 80–83 (TDFV) form an involved in Mg(2+) ion dislocation from EF-Tu region.

This sequence belongs to the EF-Ts family.

It is found in the cytoplasm. Its function is as follows. Associates with the EF-Tu.GDP complex and induces the exchange of GDP to GTP. It remains bound to the aminoacyl-tRNA.EF-Tu.GTP complex up to the GTP hydrolysis stage on the ribosome. In Rhizobium johnstonii (strain DSM 114642 / LMG 32736 / 3841) (Rhizobium leguminosarum bv. viciae), this protein is Elongation factor Ts.